Consider the following 156-residue polypeptide: Small ribosomal subunit protein uS7 (156 aa).

This sequence belongs to the universal ribosomal protein uS7 family. As to quaternary structure, part of the 30S ribosomal subunit. Contacts proteins S9 and S11.

In terms of biological role, one of the primary rRNA binding proteins, it binds directly to 16S rRNA where it nucleates assembly of the head domain of the 30S subunit. Is located at the subunit interface close to the decoding center, probably blocks exit of the E-site tRNA. The polypeptide is Small ribosomal subunit protein uS7 (Vibrio cholerae serotype O1 (strain ATCC 39315 / El Tor Inaba N16961)).